An 832-amino-acid polypeptide reads, in one-letter code: SID1 transmembrane family member 2 (832 aa).

Residues 1–18 (MIAWRLPLCVLLVASVES) form the signal peptide. The Extracellular segment spans residues 19 to 293 (HLGALGPKNV…VSQAVTSEAY (275 aa)). N-linked (GlcNAc...) asparagine glycosylation is found at asparagine 27, asparagine 54, asparagine 60, asparagine 123, asparagine 141, and asparagine 165. A helical transmembrane segment spans residues 294-314 (VGGMLFCLGIFLSFYLLTVLL). Residues 315 to 447 (ACWENWRQRK…DKRVLRKKYQ (133 aa)) lie on the Cytoplasmic side of the membrane. 3 positions are modified to phosphoserine: serine 401, serine 403, and serine 404. The chain crosses the membrane as a helical span at residues 448–468 (IYFWNIATIAVFYALPVVQLV). Residues 469–499 (ITYQTVVNVTGNQDICYYNFLCAHPLGNLSA) are Extracellular-facing. N-linked (GlcNAc...) asparagine glycosylation is found at asparagine 476 and asparagine 496. Residues 500-520 (FNNILSNLGYILLGLLFLLII) traverse the membrane as a helical segment. The Cytoplasmic portion of the chain corresponds to 521 to 546 (LQREINHNRALLRNDLYALECGIPKH). Residues 547–567 (FGLFYAMGTALMMEGLLSACY) traverse the membrane as a helical segment. Topologically, residues 568-605 (HVCPNYTNFQFDTSFMYMIAGLCMLKLYQKRHPDINAS) are extracellular. N-linked (GlcNAc...) asparagine glycans are attached at residues asparagine 572 and asparagine 603. The helical transmembrane segment at 606 to 626 (AYSAYACLAIVIFFSVLGVVF) threads the bilayer. Topologically, residues 627–631 (GKGNT) are cytoplasmic. Residues 632-652 (AFWIVFSVIHIISTLLLSTQL) form a helical membrane-spanning segment. Topologically, residues 653–688 (YYMGRWKLDSGIFRRILHVLYTDCIRQCSGPLYTDR) are extracellular. Residues 689-709 (MVLLVMGNIINWSLAAYGLIM) form a helical membrane-spanning segment. Over 710 to 715 (RPNDFA) the chain is Cytoplasmic. Residues 716 to 736 (SYLLAIGICNLLLYFAFYIIM) form a helical membrane-spanning segment. The Extracellular segment spans residues 737 to 746 (KLRSGERIKL). A helical transmembrane segment spans residues 747–767 (IPLLCIVCTSVVWGFALFFFF). Topologically, residues 768–796 (QGLSTWQKTPAESREHNRDCILLDFFDDH) are cytoplasmic. A helical membrane pass occupies residues 797 to 817 (DIWHFLSSIAMFGSFLVLLTL). Over 818–832 (DDDLDTVQRDKIYVF) the chain is Extracellular.

This sequence belongs to the SID1 family. Interacts with adapter protein complex 1 (AP-1) and AP-2, but not AP-3 and AP-4. Interacts with LAMP2. In terms of processing, glycosylated. Widely expressed, including in the liver, brain and kidney (at protein level).

It localises to the lysosome membrane. The protein localises to the cell membrane. Its function is as follows. Mediates the translocation of RNA and DNA across the lysosomal membrane during RNA and DNA autophagy (RDA), a process in which RNA and DNA is directly imported into lysosomes in an ATP-dependent manner, and degraded. Involved in the uptake of single-stranded oligonucleotides by living cells, a process called gymnosis. In vitro, mediates the uptake of linear DNA more efficiently than that of circular DNA, but exhibits similar uptake efficacy toward RNA and DNA. Binds long double-stranded RNA (dsRNA) (500 - 700 base pairs), but not dsRNA shorter than 100 bp. The chain is SID1 transmembrane family member 2 (Sidt2) from Mus musculus (Mouse).